A 440-amino-acid polypeptide reads, in one-letter code: tRNA(Ile)-lysidine synthase (440 aa).

ATP is bound at residue 13 to 18 (SGGADS).

This sequence belongs to the tRNA(Ile)-lysidine synthase family.

It localises to the cytoplasm. It catalyses the reaction cytidine(34) in tRNA(Ile2) + L-lysine + ATP = lysidine(34) in tRNA(Ile2) + AMP + diphosphate + H(+). In terms of biological role, ligates lysine onto the cytidine present at position 34 of the AUA codon-specific tRNA(Ile) that contains the anticodon CAU, in an ATP-dependent manner. Cytidine is converted to lysidine, thus changing the amino acid specificity of the tRNA from methionine to isoleucine. The polypeptide is tRNA(Ile)-lysidine synthase (Solibacter usitatus (strain Ellin6076)).